The chain runs to 330 residues: Major ferric iron-binding protein (330 aa).

Residues M1–A22 form the signal peptide. 4 residues coordinate Fe cation: H31, E79, Y217, and Y218.

The protein belongs to the bacterial solute-binding protein 1 family.

It is found in the periplasm. Functionally, this protein may be a central component in the iron-acquisition system. The sequence is that of Major ferric iron-binding protein (fbp) from Neisseria gonorrhoeae.